The chain runs to 355 residues: MNQPKSAPNSPDSAQGLSYRDAGVDIDAGDALVDAIKPFARKTLRDGVLGGIGGFGALFEVPKKYKEPVLVSGTDGVGTKLKLAFTLNRHDTVGQDLVAMSVNDILVQGAEPLFFLDYFACGKLDVGTAATVVKGIAQGCELAGCALIGGETAEMPGMYPDGEYDLAGFAVGAVEKSKIIDGSKIVPGDVVLGLASSGIHSNGYSLVRKIIERAQPDLDADFDGRTLAEALMAPTHIYVKPLLALMQQLEVKGMAHITGGGLVENIPRVLREGLTAELDHRAWPLPPLFAWLQKHGGVADAEMHRVFNCGIGMVVIVSAADADAATGLLAAAGEQVWKIGTVRQSKEGEAQTVVV.

This sequence belongs to the AIR synthase family.

Its subcellular location is the cytoplasm. It carries out the reaction 2-formamido-N(1)-(5-O-phospho-beta-D-ribosyl)acetamidine + ATP = 5-amino-1-(5-phospho-beta-D-ribosyl)imidazole + ADP + phosphate + H(+). It functions in the pathway purine metabolism; IMP biosynthesis via de novo pathway; 5-amino-1-(5-phospho-D-ribosyl)imidazole from N(2)-formyl-N(1)-(5-phospho-D-ribosyl)glycinamide: step 2/2. The protein is Phosphoribosylformylglycinamidine cyclo-ligase of Paraburkholderia phymatum (strain DSM 17167 / CIP 108236 / LMG 21445 / STM815) (Burkholderia phymatum).